The chain runs to 186 residues: Pyridoxal 5'-phosphate synthase subunit PdxT (186 aa).

An L-glutamine-binding site is contributed by 46–48; sequence GES. The active-site Nucleophile is Cys-78. Residues Arg-105 and 134 to 135 each bind L-glutamine; that span reads IR. Residues His-170 and Glu-172 each act as charge relay system in the active site.

The protein belongs to the glutaminase PdxT/SNO family. In terms of assembly, in the presence of PdxS, forms a dodecamer of heterodimers. Only shows activity in the heterodimer.

It catalyses the reaction aldehydo-D-ribose 5-phosphate + D-glyceraldehyde 3-phosphate + L-glutamine = pyridoxal 5'-phosphate + L-glutamate + phosphate + 3 H2O + H(+). The enzyme catalyses L-glutamine + H2O = L-glutamate + NH4(+). The protein operates within cofactor biosynthesis; pyridoxal 5'-phosphate biosynthesis. In terms of biological role, catalyzes the hydrolysis of glutamine to glutamate and ammonia as part of the biosynthesis of pyridoxal 5'-phosphate. The resulting ammonia molecule is channeled to the active site of PdxS. The sequence is that of Pyridoxal 5'-phosphate synthase subunit PdxT from Clostridium acetobutylicum (strain ATCC 824 / DSM 792 / JCM 1419 / IAM 19013 / LMG 5710 / NBRC 13948 / NRRL B-527 / VKM B-1787 / 2291 / W).